Here is a 249-residue protein sequence, read N- to C-terminus: Methylthioribulose-1-phosphate dehydratase (249 aa).

The Zn(2+) site is built by His103 and His105.

Belongs to the aldolase class II family. MtnB subfamily. Zn(2+) serves as cofactor.

The catalysed reaction is 5-(methylsulfanyl)-D-ribulose 1-phosphate = 5-methylsulfanyl-2,3-dioxopentyl phosphate + H2O. The protein operates within amino-acid biosynthesis; L-methionine biosynthesis via salvage pathway; L-methionine from S-methyl-5-thio-alpha-D-ribose 1-phosphate: step 2/6. Catalyzes the dehydration of methylthioribulose-1-phosphate (MTRu-1-P) into 2,3-diketo-5-methylthiopentyl-1-phosphate (DK-MTP-1-P). This chain is Methylthioribulose-1-phosphate dehydratase, found in Leptospira interrogans serogroup Icterohaemorrhagiae serovar Lai (strain 56601).